The primary structure comprises 262 residues: Acyl-[acyl-carrier-protein]--UDP-N-acetylglucosamine O-acyltransferase (262 aa).

This sequence belongs to the transferase hexapeptide repeat family. LpxA subfamily. As to quaternary structure, homotrimer.

Its subcellular location is the cytoplasm. It carries out the reaction a (3R)-hydroxyacyl-[ACP] + UDP-N-acetyl-alpha-D-glucosamine = a UDP-3-O-[(3R)-3-hydroxyacyl]-N-acetyl-alpha-D-glucosamine + holo-[ACP]. The protein operates within glycolipid biosynthesis; lipid IV(A) biosynthesis; lipid IV(A) from (3R)-3-hydroxytetradecanoyl-[acyl-carrier-protein] and UDP-N-acetyl-alpha-D-glucosamine: step 1/6. In terms of biological role, involved in the biosynthesis of lipid A, a phosphorylated glycolipid that anchors the lipopolysaccharide to the outer membrane of the cell. The sequence is that of Acyl-[acyl-carrier-protein]--UDP-N-acetylglucosamine O-acyltransferase from Pectobacterium carotovorum subsp. carotovorum (strain PC1).